The sequence spans 658 residues: NUAK family SNF1-like kinase 1 (658 aa).

N-acetylmethionine is present on Met-1. A disordered region spans residues 1-53 (MEGAAVSAAGDGPAVETGLPGSPLEAVAGATAAPVEPRKPHGVKRHHHKHNLK). Phosphoserine is present on Ser-22. Over residues 40-53 (PHGVKRHHHKHNLK) the composition is skewed to basic residues. The Protein kinase domain maps to 56-307 (YELQETLGKG…IEDIANHWWV (252 aa)). ATP is bound by residues 62–70 (LGKGTYGKV) and Lys-85. Asp-179 functions as the Proton acceptor in the catalytic mechanism. At Thr-212 the chain carries Phosphothreonine; by LKB1. Disordered regions lie at residues 353–422 (LAKP…EGIV) and 441–568 (IPLP…SYSR). Residues 378–393 (FPQSGQDSVPESPSKL) show a composition bias toward polar residues. Basic residues predominate over residues 394–405 (SSKRPKGILKKR). Residues 400 to 403 (GILK) carry the GILK motif motif. A Phosphoserine modification is found at Ser-456. The span at 519 to 530 (SCRRKGILKHSS) shows a compositional bias: basic residues. Residues 559–568 (SDGISRSYSR) show a composition bias toward low complexity. The residue at position 601 (Ser-601) is a Phosphoserine; by PKB/AKT1.

It belongs to the protein kinase superfamily. CAMK Ser/Thr protein kinase family. SNF1 subfamily. Interacts (via GILK motif) with PPP1CB; the interaction is direct and bridges NUAK1 and PPP1R12A. Interacts with CDKN1A. It depends on Mg(2+) as a cofactor. Phosphorylated at Thr-212 by STK11/LKB1 in complex with STE20-related adapter-alpha (STRADA) pseudo kinase and CAB39. Not dephosphorylated by the myosin PP1 complex when regulating its activity, due to the presence of PPP1R12A, which prevents myosin PP1 from dephosphorylating NUAK1. Phosphorylated by STK38L upon stimulation with IGF1. Post-translationally, ubiquitinated with 'Lys-29'- and 'Lys-33'-linked polyubiquitins which appear to impede LKB1-mediated phosphorylation. Deubiquitinated by USP9X. As to expression, expressed in the developing central nervous system, in epidermis, and some other tissues.

Its subcellular location is the nucleus. It is found in the cytoplasm. The enzyme catalyses L-seryl-[protein] + ATP = O-phospho-L-seryl-[protein] + ADP + H(+). It catalyses the reaction L-threonyl-[protein] + ATP = O-phospho-L-threonyl-[protein] + ADP + H(+). Activated by phosphorylation on Thr-212. Activated by phosphorylation at Ser-601 AKT1 during glucose starvation; the relevance of such activation in normal cells is however unsure. Serine/threonine-protein kinase involved in various processes such as cell adhesion, regulation of cell ploidy and senescence, cell proliferation and tumor progression. Phosphorylates ATM, CASP6, LATS1, PPP1R12A and p53/TP53. Acts as a regulator of cellular senescence and cellular ploidy by mediating phosphorylation of 'Ser-464' of LATS1, thereby controlling its stability. Controls cell adhesion by regulating activity of the myosin protein phosphatase 1 (PP1) complex. Acts by mediating phosphorylation of PPP1R12A subunit of myosin PP1: phosphorylated PPP1R12A then interacts with 14-3-3, leading to reduced dephosphorylation of myosin MLC2 by myosin PP1. May be involved in DNA damage response: phosphorylates p53/TP53 at 'Ser-15' and 'Ser-392' and is recruited to the CDKN1A/WAF1 promoter to participate in transcription activation by p53/TP53. May also act as a tumor malignancy-associated factor by promoting tumor invasion and metastasis under regulation and phosphorylation by AKT1. Suppresses Fas-induced apoptosis by mediating phosphorylation of CASP6, thereby suppressing the activation of the caspase and the subsequent cleavage of CFLAR. Regulates UV radiation-induced DNA damage response mediated by CDKN1A. In association with STK11, phosphorylates CDKN1A in response to UV radiation and contributes to its degradation which is necessary for optimal DNA repair. In Mus musculus (Mouse), this protein is NUAK family SNF1-like kinase 1 (Nuak1).